Reading from the N-terminus, the 259-residue chain is VLIRVLANLLLLQLSYAQESSELVIGGDECDINEHPFLVALHTARSKRFHCAGTLLNKEWVLTAARCDMENMQIYLGLHNISRPNQDQKRRVPKEKHFCVSSKTYTRWDKDIMLIRLKRPVNDGTHIAPLSLPSNPPSVGSVCRIMGWGSITTTKVTYPDVPHCANIKLFDYSVCRDAYKGLPEKSRTLCAGILEGGIDSCKVDNGGPLICNGQFQGIGSWEGHPCAQPLKPALYTNVFEYTDWIEGIIARNTTVTCPP.

The first 17 residues, 1 to 17 (VLIRVLANLLLLQLSYA), serve as a signal peptide directing secretion. Residues 18 to 23 (QESSEL) constitute a propeptide that is removed on maturation. The Peptidase S1 domain occupies 24-250 (VIGGDECDIN…YTDWIEGIIA (227 aa)). 6 disulfides stabilise this stretch: C30–C164, C51–C67, C99–C257, C143–C211, C175–C190, and C201–C226. An N-linked (GlcNAc...) asparagine glycan is attached at N80. N252 carries an N-linked (GlcNAc...) asparagine glycan.

It belongs to the peptidase S1 family. Snake venom subfamily. As to expression, expressed by the venom gland.

It localises to the secreted. Its function is as follows. Snake venom serine protease homolog that may act in the hemostasis system of the prey. The chain is Snake venom serine protease homolog rhinocerase 3 from Bitis rhinoceros (West African gaboon viper).